The chain runs to 477 residues: Cytochrome b mRNA maturase bI3 (477 aa).

Residues 1–163 form a cytochrome b region; sequence MRLLKSHPLL…IPWIGQDIVE (163 aa). The next 5 helical transmembrane spans lie at 32 to 52, 86 to 106, 113 to 133, 142 to 162, and 166 to 186; these read FGSL…TLAM, ASAF…YGSY, VWAI…LGYV, WGAT…QDIV, and IITL…VVVY. Positions 164–477 are maturase; the sequence is SKIITLIINL…YSTLNYPDAK (314 aa).

The protein in the N-terminal section; belongs to the cytochrome b family. It in the C-terminal section; belongs to the LAGLIDADG endonuclease family.

The protein localises to the mitochondrion inner membrane. In terms of biological role, mitochondrial mRNA maturase required for splicing of intron 3 of the cytochrome b (cob) gene, containing its own coding sequence. The chain is Cytochrome b mRNA maturase bI3 (bI3) from Neurospora crassa (strain ATCC 24698 / 74-OR23-1A / CBS 708.71 / DSM 1257 / FGSC 987).